The following is a 309-amino-acid chain: Methionyl-tRNA formyltransferase (309 aa).

107 to 110 (SLLP) is a binding site for (6S)-5,6,7,8-tetrahydrofolate.

It belongs to the Fmt family.

It carries out the reaction L-methionyl-tRNA(fMet) + (6R)-10-formyltetrahydrofolate = N-formyl-L-methionyl-tRNA(fMet) + (6S)-5,6,7,8-tetrahydrofolate + H(+). Attaches a formyl group to the free amino group of methionyl-tRNA(fMet). The formyl group appears to play a dual role in the initiator identity of N-formylmethionyl-tRNA by promoting its recognition by IF2 and preventing the misappropriation of this tRNA by the elongation apparatus. This Borrelia recurrentis (strain A1) protein is Methionyl-tRNA formyltransferase.